A 163-amino-acid polypeptide reads, in one-letter code: Nucleotide-binding protein cbdbA1256 (163 aa).

Belongs to the YajQ family.

Functionally, nucleotide-binding protein. The chain is Nucleotide-binding protein cbdbA1256 from Dehalococcoides mccartyi (strain CBDB1).